The chain runs to 391 residues: 3-ketoacyl-CoA thiolase (391 aa).

Residue Cys90 is the Acyl-thioester intermediate of the active site. Catalysis depends on proton acceptor residues His347 and Cys377.

Belongs to the thiolase-like superfamily. Thiolase family.

The catalysed reaction is an acyl-CoA + acetyl-CoA = a 3-oxoacyl-CoA + CoA. The protein operates within lipid metabolism; fatty acid beta-oxidation. Involved in the degradation of long-chain fatty acids. The sequence is that of 3-ketoacyl-CoA thiolase (fadA) from Bacillus subtilis (strain 168).